Consider the following 501-residue polypeptide: Cytochrome P450 90A4 (501 aa).

Residues Ala-2 to Leu-22 form a helical membrane-spanning segment. Cys-446 serves as a coordination point for heme.

It belongs to the cytochrome P450 family. The cofactor is heme. As to expression, highly expressed in shoot apex and inflorenscence. Expressed in roots, stems, leaf blades and leaf sheaths.

The protein resides in the cell membrane. The protein operates within plant hormone biosynthesis; brassinosteroid biosynthesis. Its function is as follows. Catalyzes the C23-alpha-hydroxylation step in brassinosteroid biosynthesis. Converts 6-deoxocathasterone to 6-deoxoteasterone in the late C6-oxidation pathway and cathasterone to teasterone (TE) in the early C6-oxidation pathway of brassinolide (BL) biosynthesis. In Oryza sativa subsp. japonica (Rice), this protein is Cytochrome P450 90A4.